A 188-amino-acid polypeptide reads, in one-letter code: VQ motif-containing protein 18 (188 aa).

3 disordered regions span residues 1–20, 58–92, and 157–188; these read MEIT…VSMN, LTGK…HQPV, and GFIF…HNSS. The VQ motif lies at 51–60; that stretch reads FRSLVQSLTG. Over residues 161–179 the composition is skewed to low complexity; the sequence is NNNNNNNNNNNNNNNNNTN.

It is found in the nucleus. Its function is as follows. May function as positive regulator of plant growth. In Arabidopsis thaliana (Mouse-ear cress), this protein is VQ motif-containing protein 18.